The following is a 203-amino-acid chain: B-cell CLL/lymphoma 7 protein family member B-A (203 aa).

2 disordered regions span residues 55–80 (KEKE…ESSD) and 94–148 (SNQS…EIME). Over residues 109–129 (ADSSNNSSPPASEPVSPAPQS) the composition is skewed to low complexity.

This sequence belongs to the BCL7 family.

The chain is B-cell CLL/lymphoma 7 protein family member B-A (bcl7ba) from Danio rerio (Zebrafish).